The sequence spans 1036 residues: Multiple C2 domain and transmembrane region protein 2 (1036 aa).

In terms of domain architecture, C2 1 spans 1 to 110 (MRNTTKLVVH…YKDDQVYQRF (110 aa)). 2 disordered regions span residues 137-204 (DQTF…PVQK) and 225-246 (RENP…HPQN). Over residues 146–155 (PYTSPTQASA) the composition is skewed to polar residues. Positions 158-168 (TEEDTADSETE) are enriched in acidic residues. The segment covering 190–204 (VEGKKSEEVKEPVQK) has biased composition (basic and acidic residues). C2 domains lie at 277 to 399 (PNAG…PQWY), 440 to 563 (VHGE…SRWF), and 607 to 734 (YISD…THSF). Ca(2+) contacts are provided by Asp-316, Asp-364, Glu-366, and Asp-372. 2 helical membrane-spanning segments follow: residues 871 to 891 (FILV…MFFI) and 979 to 999 (LFIL…FKAI).

Belongs to the MCTP family. Ca(2+) serves as cofactor. Expressed in the vascular tissues of roots and rosette leaves. Accumulates in roots meristems. Observed in flowers.

It is found in the cell membrane. In terms of biological role, may function as a signaling molecule by regulating the trafficking of other regulators. The protein is Multiple C2 domain and transmembrane region protein 2 of Arabidopsis thaliana (Mouse-ear cress).